Consider the following 510-residue polypeptide: NAD(P)H-quinone oxidoreductase subunit 2 B, chloroplastic (510 aa).

12 consecutive transmembrane segments (helical) span residues 24-44 (LLLF…GLIL), 59-79 (WFYF…LFRW), 99-119 (IFQF…VEYI), 124-144 (MAIT…MFLC), 149-169 (LITI…LSGY), 183-203 (YLLM…WLYG), 229-249 (ISIA…PAPF), 295-315 (WHLL…LLAI), 323-343 (MLAY…IVGD), 354-374 (YMLF…LFGL), 395-415 (ALSL…AGFF), and 418-438 (LYLF…IGLL).

The protein belongs to the complex I subunit 2 family. NDH is composed of at least 16 different subunits, 5 of which are encoded in the nucleus.

The protein localises to the plastid. It is found in the chloroplast thylakoid membrane. It carries out the reaction a plastoquinone + NADH + (n+1) H(+)(in) = a plastoquinol + NAD(+) + n H(+)(out). It catalyses the reaction a plastoquinone + NADPH + (n+1) H(+)(in) = a plastoquinol + NADP(+) + n H(+)(out). Functionally, NDH shuttles electrons from NAD(P)H:plastoquinone, via FMN and iron-sulfur (Fe-S) centers, to quinones in the photosynthetic chain and possibly in a chloroplast respiratory chain. The immediate electron acceptor for the enzyme in this species is believed to be plastoquinone. Couples the redox reaction to proton translocation, and thus conserves the redox energy in a proton gradient. This is NAD(P)H-quinone oxidoreductase subunit 2 B, chloroplastic from Lolium perenne (Perennial ryegrass).